The sequence spans 358 residues: ATPase ASNA1 homolog (358 aa).

35 to 42 (KGGVGKTT) contributes to the ATP binding site. Asp64 is an active-site residue. Glu235 and Asn262 together coordinate ATP.

The protein belongs to the arsA ATPase family. Homodimer.

It localises to the cytoplasm. The protein localises to the endoplasmic reticulum. Functionally, ATPase required for the post-translational delivery of tail-anchored (TA) proteins to the endoplasmic reticulum. Recognizes and selectively binds the transmembrane domain of TA proteins in the cytosol. This complex then targets to the endoplasmic reticulum by membrane-bound receptors, where the tail-anchored protein is released for insertion. This process is regulated by ATP binding and hydrolysis. ATP binding drives the homodimer towards the closed dimer state, facilitating recognition of newly synthesized TA membrane proteins. ATP hydrolysis is required for insertion. Subsequently, the homodimer reverts towards the open dimer state, lowering its affinity for the membrane-bound receptor, and returning it to the cytosol to initiate a new round of targeting. The sequence is that of ATPase ASNA1 homolog from Babesia bovis.